Reading from the N-terminus, the 156-residue chain is Small ribosomal subunit protein uS7 (156 aa).

The protein belongs to the universal ribosomal protein uS7 family. In terms of assembly, part of the 30S ribosomal subunit. Contacts proteins S9 and S11.

Functionally, one of the primary rRNA binding proteins, it binds directly to 16S rRNA where it nucleates assembly of the head domain of the 30S subunit. Is located at the subunit interface close to the decoding center, probably blocks exit of the E-site tRNA. In Rhodopseudomonas palustris (strain BisB18), this protein is Small ribosomal subunit protein uS7.